Here is a 364-residue protein sequence, read N- to C-terminus: Trans-enoyl reductase sthE (364 aa).

51 to 54 (TDYK) contributes to the NADP(+) binding site. Residue 137–144 (WGTAALAI) coordinates substrate. Residues 172–175 (ATAT), 195–198 (SESS), Tyr-213, and 261–262 (LE) contribute to the NADP(+) site. A substrate-binding site is contributed by 281 to 285 (GFEGQ). Residue 351-352 (VK) coordinates NADP(+).

This sequence belongs to the zinc-containing alcohol dehydrogenase family. Monomer.

The catalysed reaction is 7 malonyl-CoA + acetyl-CoA + 10 AH2 + 5 S-adenosyl-L-methionine + 2 H(+) = dehydroprobetaenone I + 10 A + 5 S-adenosyl-L-homocysteine + 7 CO2 + 8 CoA + 6 H2O. It functions in the pathway mycotoxin biosynthesis. Functionally, trans-enoyl reductase; part of the gene cluster that mediates the biosynthesis of the phytotoxin stemphyloxin II. The first step of the pathway is the synthesis of dehydroprobetaenone I by the polyketide synthase sthA and the enoyl reductase sthE via condensation of one acetyl-CoA starter unit with 7 malonyl-CoA units and 5 methylations. The C-terminal reductase (R) domain of sthA catalyzes the reductive release of the polyketide chain. Because sthA lacks a designated enoylreductase (ER) domain, the required activity is provided the enoyl reductase sthE. The short-chain dehydrogenase/reductase sthC then catalyzes reduction of dehydroprobetaenone I to probetaenone I. The cytochrome P450 monooxygenase sthF catalyzes successive epoxidation, oxidation (resulting from epoxide opening) and hydroxylation to install a tertiary alcohol in the decaline ring to yield betaenone C from dehydroprobetaenone I and betaenone B from probetaenone I. The FAD-linked oxidoreductase sthB is responsible for the conversion of betaenone C to betaenone A via an intramolecular aldol reaction between C-1 and C-17 to form the bridged tricyclic system in betaenone A. Finally, the cytochrome P450 monooxygenase sthD catalyzes the hydroxylation of C-15 to afford the final metabolite stemphyloxin II. The sequence is that of Trans-enoyl reductase sthE from Phaeosphaeria nodorum (strain SN15 / ATCC MYA-4574 / FGSC 10173) (Glume blotch fungus).